The chain runs to 454 residues: Chromosomal replication initiator protein DnaA (454 aa).

The interval 1–74 is domain I, interacts with DnaA modulators; the sequence is MFDLDKFWQF…IQEAYAYADM (74 aa). A domain II region spans residues 74-116; the sequence is MEIQPKFEVAGKEGPERLVTPQPRIKTNQEILENRRDEFAQDL. Residues 117 to 333 form a domain III, AAA+ region region; that stretch reads QLNSKYTFDT…GALVKVQAHA (217 aa). The ATP site is built by glycine 161, glycine 163, lysine 164, and threonine 165. The interval 334 to 454 is domain IV, binds dsDNA; that stretch reads TIEREDINVD…VYDLKAMLEH (121 aa).

This sequence belongs to the DnaA family. Oligomerizes as a right-handed, spiral filament on DNA at oriC.

It is found in the cytoplasm. Its function is as follows. Plays an essential role in the initiation and regulation of chromosomal replication. ATP-DnaA binds to the origin of replication (oriC) to initiate formation of the DNA replication initiation complex once per cell cycle. Binds the DnaA box (a 9 base pair repeat at the origin) and separates the double-stranded (ds)DNA. Forms a right-handed helical filament on oriC DNA; dsDNA binds to the exterior of the filament while single-stranded (ss)DNA is stabiized in the filament's interior. The ATP-DnaA-oriC complex binds and stabilizes one strand of the AT-rich DNA unwinding element (DUE), permitting loading of DNA polymerase. After initiation quickly degrades to an ADP-DnaA complex that is not apt for DNA replication. Binds acidic phospholipids. The protein is Chromosomal replication initiator protein DnaA of Lactobacillus johnsonii (strain CNCM I-12250 / La1 / NCC 533).